Here is a 343-residue protein sequence, read N- to C-terminus: L-threonine 3-dehydrogenase (343 aa).

C38 provides a ligand contact to Zn(2+). Active-site charge relay system residues include T40 and H43. Zn(2+) is bound by residues H63, E64, C93, C96, C99, and C107. NAD(+) is bound by residues I175, D195, R200, 262 to 264, and 286 to 287; these read LGL and IY.

The protein belongs to the zinc-containing alcohol dehydrogenase family. Homotetramer. Zn(2+) serves as cofactor.

Its subcellular location is the cytoplasm. It catalyses the reaction L-threonine + NAD(+) = (2S)-2-amino-3-oxobutanoate + NADH + H(+). It functions in the pathway amino-acid degradation; L-threonine degradation via oxydo-reductase pathway; glycine from L-threonine: step 1/2. In terms of biological role, catalyzes the NAD(+)-dependent oxidation of L-threonine to 2-amino-3-ketobutyrate. In Saccharopolyspora erythraea (strain ATCC 11635 / DSM 40517 / JCM 4748 / NBRC 13426 / NCIMB 8594 / NRRL 2338), this protein is L-threonine 3-dehydrogenase.